The following is a 142-amino-acid chain: Hemoglobin subunit alpha-2 (142 aa).

S1 is modified (N-acetylserine). The Globin domain occupies 1 to 142; sequence SLSTKDKETV…LSRALSEKYR (142 aa). H59 is an O2 binding site. H88 contributes to the heme b binding site.

Belongs to the globin family. Hb2 is a heterotetramer of two alpha-2 chains and two beta chains. In terms of tissue distribution, red blood cells.

In terms of biological role, involved in oxygen transport from gills to the various peripheral tissues. The polypeptide is Hemoglobin subunit alpha-2 (hba2) (Trematomus newnesi (Dusky notothen)).